We begin with the raw amino-acid sequence, 341 residues long: N-acetyl-gamma-glutamyl-phosphate reductase (341 aa).

The active site involves cysteine 147.

This sequence belongs to the NAGSA dehydrogenase family. Type 1 subfamily.

The protein localises to the cytoplasm. The catalysed reaction is N-acetyl-L-glutamate 5-semialdehyde + phosphate + NADP(+) = N-acetyl-L-glutamyl 5-phosphate + NADPH + H(+). It participates in amino-acid biosynthesis; L-arginine biosynthesis; N(2)-acetyl-L-ornithine from L-glutamate: step 3/4. Functionally, catalyzes the NADPH-dependent reduction of N-acetyl-5-glutamyl phosphate to yield N-acetyl-L-glutamate 5-semialdehyde. In Dehalococcoides mccartyi (strain CBDB1), this protein is N-acetyl-gamma-glutamyl-phosphate reductase.